The sequence spans 197 residues: Putative methyltransferase Mtx subunit A (197 aa).

It belongs to the MtrA family. As to quaternary structure, may be part of a complex composed of 3 subunits; MtxA, MtxH and MtxX.

The sequence is that of Putative methyltransferase Mtx subunit A (mtxA) from Methanosarcina barkeri (strain Fusaro / DSM 804).